A 433-amino-acid polypeptide reads, in one-letter code: tRNA-2-methylthio-N(6)-dimethylallyladenosine synthase (433 aa).

The MTTase N-terminal domain occupies 3-118 (KKLFIQTLGC…ISTAVKTPKF (116 aa)). The [4Fe-4S] cluster site is built by Cys12, Cys49, Cys81, Cys150, Cys154, and Cys157. Residues 136–369 (RGSPYKSHIN…QSRHNEILDE (234 aa)) form the Radical SAM core domain. A TRAM domain is found at 372 to 433 (AAQEGKILDV…RMVLYGELAN (62 aa)).

This sequence belongs to the methylthiotransferase family. MiaB subfamily. Monomer. [4Fe-4S] cluster is required as a cofactor.

Its subcellular location is the cytoplasm. It carries out the reaction N(6)-dimethylallyladenosine(37) in tRNA + (sulfur carrier)-SH + AH2 + 2 S-adenosyl-L-methionine = 2-methylsulfanyl-N(6)-dimethylallyladenosine(37) in tRNA + (sulfur carrier)-H + 5'-deoxyadenosine + L-methionine + A + S-adenosyl-L-homocysteine + 2 H(+). Catalyzes the methylthiolation of N6-(dimethylallyl)adenosine (i(6)A), leading to the formation of 2-methylthio-N6-(dimethylallyl)adenosine (ms(2)i(6)A) at position 37 in tRNAs that read codons beginning with uridine. The sequence is that of tRNA-2-methylthio-N(6)-dimethylallyladenosine synthase from Campylobacter curvus (strain 525.92).